A 356-amino-acid chain; its full sequence is MELTDLLLAAMLLAVARLTLSSPVAPACDPRLLNKLLRDSHLLHSRLSQCPDVDPLSIPVLLPAVDFSLGEWKTQTEQSKAQDILGAVSLLLEGVMAARGQLEPSCLSSLLGQLSGQVRLLLGALQGLLGTQLPLQGRTTAHKDPNALFLSLQQLLRGKVRFLLLVEGPTLCVRRTLPTTAVPSSTSQLLTLNKFPNRTSGLLETNFSVTARTAGPGLLSRLQGFRVKITPGQLNQTSRSPVQISGYLNRTHGPVNGTHGLFAGTSLQTLEASDISPGAFNKGSLAFNLQGGLPPSPSLAPDGHTPFPPSPALPTTHGSPPQLHPLFPDPSTTMPNSTAPHPVTMYPHPRNLSQET.

The N-terminal stretch at 1 to 21 is a signal peptide; sequence MELTDLLLAAMLLAVARLTLS. Disulfide bonds link Cys-28–Cys-172 and Cys-50–Cys-106. Residues Asn-197, Asn-206, Asn-235, Asn-249, Asn-256, Asn-336, and Asn-351 are each glycosylated (N-linked (GlcNAc...) asparagine). Residues 291 to 356 form a disordered region; that stretch reads GGLPPSPSLA…PHPRNLSQET (66 aa). The segment covering 330–339 has biased composition (polar residues); sequence PSTTMPNSTA.

It belongs to the EPO/TPO family. In terms of tissue distribution, found mainly in the liver, kidney and skeletal muscle.

It localises to the secreted. Lineage-specific cytokine affecting the proliferation and maturation of megakaryocytes from their committed progenitor cells. It acts at a late stage of megakaryocyte development. It may be the major physiological regulator of circulating platelets. This chain is Thrombopoietin (Thpo), found in Mus musculus (Mouse).